Here is a 501-residue protein sequence, read N- to C-terminus: Cytochrome P450 3A6 (501 aa).

C440 is a binding site for heme.

It belongs to the cytochrome P450 family. It depends on heme as a cofactor.

It localises to the endoplasmic reticulum membrane. It is found in the microsome membrane. It catalyses the reaction an organic molecule + reduced [NADPH--hemoprotein reductase] + O2 = an alcohol + oxidized [NADPH--hemoprotein reductase] + H2O + H(+). Its function is as follows. Exhibits progesterone 6 beta-hydroxylase activity. This chain is Cytochrome P450 3A6 (CYP3A6), found in Oryctolagus cuniculus (Rabbit).